Consider the following 982-residue polypeptide: Serine/threonine-protein kinase SULU (982 aa).

A Protein kinase domain is found at 30 to 289 (YQDLREIGHG…AEECFRHPFI (260 aa)). ATP is bound by residues 36–44 (IGHGSFGAV) and Lys59. The active-site Proton acceptor is the Asp153. 4 disordered regions span residues 331 to 484 (GKEG…PLDT), 592 to 620 (QNNE…QNQQ), 751 to 789 (LETQ…RDLK), and 957 to 982 (RTGS…QMAM). Residues 353–373 (SIGRAGDSASSRSASLTSFRS) show a composition bias toward low complexity. Residues 421–431 (QMLSSTSTSGV) are compositionally biased toward polar residues. Over residues 459 to 472 (IPTSQPTSKSESSS) the composition is skewed to low complexity. Residues 595-608 (ELDKRKKDIEDGEK) are compositionally biased toward basic and acidic residues. The segment covering 759–768 (SASQNEYTQR) has biased composition (polar residues). Residues 957-967 (RTGSTSRSSGG) are compositionally biased toward low complexity. Positions 973–982 (GNSSSIQMAM) are enriched in polar residues.

It belongs to the protein kinase superfamily. Ser/Thr protein kinase family. STE20 subfamily. It depends on Mg(2+) as a cofactor. As to expression, expressed in the pharynx, including the pharyngeal muscle of the metacorpus, the isthmus, and the terminal bulb; in the intestine, including the pharyngeointestinal valve between the pharynx and the intestine, a structure near the anus likely to be the anal sphincter and the excretory cell and in several ring neurons.

The protein localises to the cytoplasm. It localises to the cytoskeleton. It is found in the cell cortex. It carries out the reaction L-seryl-[protein] + ATP = O-phospho-L-seryl-[protein] + ADP + H(+). It catalyses the reaction L-threonyl-[protein] + ATP = O-phospho-L-threonyl-[protein] + ADP + H(+). In terms of biological role, acts as a negative regulator of cortical contractions during early embryonic cell division, possibly by regulating rho-1-dependent actomyosin contractility. Plays a role in polarity establishment in early embryos by regulating the size of the anterior and posterior cortex in the first asymmetric cell division. Might play a role in cell cycle progression. In the germline, involved in the regulation of meiotic progression during oogenesis, possibly by modulating the timing of mpk-1 activation. Plays a role in meiotic recombination events. Involved in pharyngeal pumping. This is Serine/threonine-protein kinase SULU (kin-18) from Caenorhabditis elegans.